We begin with the raw amino-acid sequence, 605 residues long: MGNDKTNMIIAIALSLAVLLGWNYFVAAPQVERQRQQQAQTSASPSPKEGGPSAPVPGTLPGASGGNPQAALTREEALARSPRVRIDTEALKGSVALKGGRIDDVALKGYHETVDPKSPEIVLLSPAGSANPYYAEFGWVGQGAGPLPNGDTVWTADGDLLTAKKPLTLTWDNGAGLVFRRTLSVDDKYMFTVEDSVENKGQSAVTLYPYGLVSRWGKPHTQGYYVLHEGLIGVLGDKGLQEYTYDKMAKENPLGSPGTRGLSWPGVTGGFLGITDKYWAAATIPDQKTPYTGSFTERDEGATKVYQTSSLGEARTLAPGAGVQASQHLFAGAKEVSTIDAYRQKLDIKQFDLMIDWGWFYFITKPMFKALDFFYKLFGNFGVSILVVTLILKLFFLPIANRSYVSMAKMKAVQPEMTAIRERYADDKVKQQQAMMELYRKEKINPVAGCWPVVIQIPVFFALYKVLFVTIEMRHAPFFGWIRDLAAPDPTSVLNLFGLLPFAAPDLVHLGVWPIVMGITMFLQMKMNPAPPDPVQAQVFTFMPIIFTFMLGSFPAGLVIYWAWNNLLSILQQYWIMRRNGVKVELWDNLRTTFSRSSPVKAAKG.

The chain crosses the membrane as a helical span at residues 8-28; it reads MIIAIALSLAVLLGWNYFVAA. Positions 35-47 are enriched in low complexity; the sequence is RQQQAQTSASPSP. The interval 35-71 is disordered; the sequence is RQQQAQTSASPSPKEGGPSAPVPGTLPGASGGNPQAA. 4 consecutive transmembrane segments (helical) span residues 377 to 397, 451 to 471, 496 to 516, and 540 to 560; these read LFGN…LFFL, WPVV…FVTI, LFGL…WPIV, and FTFM…GLVI.

Belongs to the OXA1/ALB3/YidC family. Type 1 subfamily. As to quaternary structure, interacts with the Sec translocase complex via SecD. Specifically interacts with transmembrane segments of nascent integral membrane proteins during membrane integration.

The protein localises to the cell inner membrane. Its function is as follows. Required for the insertion and/or proper folding and/or complex formation of integral membrane proteins into the membrane. Involved in integration of membrane proteins that insert both dependently and independently of the Sec translocase complex, as well as at least some lipoproteins. Aids folding of multispanning membrane proteins. The protein is Membrane protein insertase YidC of Methylobacterium nodulans (strain LMG 21967 / CNCM I-2342 / ORS 2060).